The primary structure comprises 78 residues: Longicornsin (78 aa).

Positions 1–22 (MAESTTTCFLLLVTGYVTAVMS) are cleaved as a signal peptide. Residues 23–29 (EEAHLRS) constitute a propeptide that is removed on maturation. Intrachain disulfides connect cysteine 35/cysteine 58, cysteine 43/cysteine 63, and cysteine 47/cysteine 65.

As to expression, salivary glands (at protein level).

It is found in the secreted. Has antibacterial activity against the Gram-positive bacteria S.aureus ATCC2592 (MIC=0.8 ug/ml), S.aureus 6A (MIC=0.8 ug/ml) and S.aureus 15A (MIC=1.6 ug/ml), and against the Gram-negative bacteria E.coli ATCC 25922 (MIC=3.2 ug/ml), E.coli 23A (MIC=6.4 ug/ml), E.coli 27A (MIC=6.4 ug/ml), P.aeruginosa 3A (MIC=3.2 ug/ml), P.aeruginosa 7A (MIC=0.8 ug/ml) and H.pylori NCTC11637 (MIC=6.4 ug/ml). Has antifungal activity against C.albidus ATCC2002 (MIC=25.6 ug/ml). Very low hemolytic activity against rabbit erythrocytes. This Haemaphysalis longicornis (Bush tick) protein is Longicornsin.